The chain runs to 88 residues: UPF0237 protein SMU_72 (88 aa).

The region spanning 4-77 (IITVVGKDRT…ETLNVKINIQ (74 aa)) is the ACT domain.

It belongs to the UPF0237 family. In terms of assembly, homodimer.

This chain is UPF0237 protein SMU_72, found in Streptococcus mutans serotype c (strain ATCC 700610 / UA159).